The following is a 264-amino-acid chain: MAALIHEARLFFIALQFFTRVPVPAWVGYTPEWMHASARHYPLVGAWVGGVAALVLWLAAQVWPLSVAVGLSMAATVWLTGGFHEDGLADTCDGLGGSVSRERALTIMKDSRLGSYGALGLVGVLGLKAVALYELTDFDGVQALIALVWAHAVSRAVPVALLRLLPYAGDAEHAKAKPMAQQVSDAGLAAALGWAALACAAAWGLGASAFTLACAALGVIALAAFCVRWYRQRLGGYTGDTLGAAQQLCELAAYLGWLAGVWFE.

The next 7 membrane-spanning stretches (helical) occupy residues 10–30, 43–63, 113–133, 141–161, 183–203, 205–225, and 243–263; these read LFFI…VGYT, LVGA…AQVW, LGSY…VALY, VQAL…PVAL, VSDA…AAAW, LGAS…LAAF, and GAAQ…GVWF.

It belongs to the CobS family. Requires Mg(2+) as cofactor.

It localises to the cell inner membrane. The enzyme catalyses alpha-ribazole + adenosylcob(III)inamide-GDP = adenosylcob(III)alamin + GMP + H(+). It carries out the reaction alpha-ribazole 5'-phosphate + adenosylcob(III)inamide-GDP = adenosylcob(III)alamin 5'-phosphate + GMP + H(+). The protein operates within cofactor biosynthesis; adenosylcobalamin biosynthesis; adenosylcobalamin from cob(II)yrinate a,c-diamide: step 7/7. Functionally, joins adenosylcobinamide-GDP and alpha-ribazole to generate adenosylcobalamin (Ado-cobalamin). Also synthesizes adenosylcobalamin 5'-phosphate from adenosylcobinamide-GDP and alpha-ribazole 5'-phosphate. This is Adenosylcobinamide-GDP ribazoletransferase from Leptothrix cholodnii (strain ATCC 51168 / LMG 8142 / SP-6) (Leptothrix discophora (strain SP-6)).